The sequence spans 221 residues: Transcription antitermination protein NusB (221 aa).

This sequence belongs to the NusB family.

In terms of biological role, involved in transcription antitermination. Required for transcription of ribosomal RNA (rRNA) genes. Binds specifically to the boxA antiterminator sequence of the ribosomal RNA (rrn) operons. In Synechocystis sp. (strain ATCC 27184 / PCC 6803 / Kazusa), this protein is Transcription antitermination protein NusB.